The following is a 561-amino-acid chain: DNA ligase (561 aa).

An ATP-binding site is contributed by glutamate 247. Lysine 249 serves as the catalytic N6-AMP-lysine intermediate. Residues arginine 254, arginine 269, glutamate 299, phenylalanine 339, arginine 414, and lysine 420 each coordinate ATP.

Belongs to the ATP-dependent DNA ligase family. Monomer. Mg(2+) is required as a cofactor.

The enzyme catalyses ATP + (deoxyribonucleotide)n-3'-hydroxyl + 5'-phospho-(deoxyribonucleotide)m = (deoxyribonucleotide)n+m + AMP + diphosphate.. DNA ligase that seals nicks in double-stranded DNA during DNA replication, DNA recombination and DNA repair. In Pyrococcus furiosus (strain ATCC 43587 / DSM 3638 / JCM 8422 / Vc1), this protein is DNA ligase.